Consider the following 633-residue polypeptide: Proline-rich protein LAS17 (633 aa).

One can recognise a WH1 domain in the interval 16 to 127 (LPKASNKIID…KRVQKRERYA (112 aa)). Disordered stretches follow at residues 145 to 545 (REEQ…TTGD) and 563 to 606 (ALRK…PASL). Residues 192 to 215 (AETFDSDQTSSFSDINSTTASAPT) are compositionally biased toward low complexity. Pro residues-rich tracts occupy residues 216-225 (TPAPALPPAS) and 238-256 (SLPP…PQHN). Low complexity-rich tracts occupy residues 257 to 269 (SPPQ…QPQS) and 307 to 322 (PQQN…RNNR). At threonine 334 the chain carries Phosphothreonine. At serine 337 the chain carries Phosphoserine. The span at 342 to 357 (PAPPPPPRRGPAPPPP) shows a compositional bias: pro residues. Polar residues-rich tracts occupy residues 363 to 376 (TSNT…NSLL), 399 to 414 (NVTM…NSNR), and 454 to 465 (PQNTQAPSQATN). The span at 479–488 (QSQIPQSAPS) shows a compositional bias: low complexity. The WH2 domain occupies 547 to 567 (GRDALLASIRGAGGIGALRKV). Position 588 is a phosphoserine (serine 588).

Interacts with KRE6, LSB3, LSB5 and YSC84.

The protein is Proline-rich protein LAS17 (LAS17) of Saccharomyces cerevisiae (strain ATCC 204508 / S288c) (Baker's yeast).